Consider the following 123-residue polypeptide: Fluoride-specific ion channel FluC (123 aa).

4 helical membrane passes run 1–21 (MQWL…GWLA), 32–52 (LGTL…LVWF), 66–86 (FVIT…VEVF), and 99–119 (GLIG…FYFF). The Na(+) site is built by glycine 73 and threonine 76.

This sequence belongs to the fluoride channel Fluc/FEX (TC 1.A.43) family.

It localises to the cell inner membrane. It catalyses the reaction fluoride(in) = fluoride(out). With respect to regulation, na(+) is not transported, but it plays an essential structural role and its presence is essential for fluoride channel function. Its function is as follows. Fluoride-specific ion channel. Important for reducing fluoride concentration in the cell, thus reducing its toxicity. The protein is Fluoride-specific ion channel FluC of Psychrobacter cryohalolentis (strain ATCC BAA-1226 / DSM 17306 / VKM B-2378 / K5).